The primary structure comprises 184 residues: Signal peptidase I S (184 aa).

The Cytoplasmic segment spans residues 1–18 (MKSENVSKKKSILEWAKA). A helical membrane pass occupies residues 19–39 (IVIAVVLALLIRNFIFAPYVV). The Extracellular portion of the chain corresponds to 40-184 (DGDSMYPTLH…YPFNEMRKTN (145 aa)). Residues Ser-43 and Lys-83 contribute to the active site.

The protein belongs to the peptidase S26 family.

Its subcellular location is the cell membrane. It carries out the reaction Cleavage of hydrophobic, N-terminal signal or leader sequences from secreted and periplasmic proteins.. Not essential for cell viability, but required for efficient secretion of many proteins. The chain is Signal peptidase I S (sipS) from Bacillus subtilis (strain 168).